A 163-amino-acid chain; its full sequence is General stress protein 16O (163 aa).

Residues 19-30 (QKELSGEKKETE) are compositionally biased toward basic and acidic residues. Disordered regions lie at residues 19–55 (QKELSGEKKETESMTEEVGELSNGVDNHMADHGTLVT) and 115–163 (ADVE…QDSK). The dksA C4-type; degenerate zinc finger occupies 89–123 (CEKTGQEIPYERLEAVPYARMTVEAQADVEDDLET). Residues 127–146 (SYEREFHEQVKDLSNKETID) are compositionally biased toward basic and acidic residues.

This Bacillus subtilis (strain 168) protein is General stress protein 16O (yocK).